We begin with the raw amino-acid sequence, 64 residues long: Bowman-Birk type trypsin inhibitor TI1 (64 aa).

Cystine bridges form between Cys9-Cys61, Cys10-Cys25, Cys15-Cys23, Cys32-Cys39, and Cys36-Cys49.

Belongs to the Bowman-Birk serine protease inhibitor family.

This is Bowman-Birk type trypsin inhibitor TI1 from Coix lacryma-jobi (Job's tears).